The primary structure comprises 610 residues: MRYIAGIDIGNSSTEVALATLDESGALSITGSALAETTGIKGTLRNVFGIQEALSLAAKNAGINVSDISLIRINEATPVIGDVAMETITETIITESTMIGHNPKTPGGVGLGVGVTITPEDLLSRPADTPYILVVSSAFDFADVATMINASVRAGYQLTGVILQQDDGVLVSNRLTHPLPIVDEVLHIDRIPLGMLAAIEVAIPGKVIETLSNPYGIATVFGLNADETKNIVPMARALIGNRSAVVVKTPSGDVKARAIPAGNLELQSQGRTVRVDVAAGAEAIMKAVGECPKLDNVTGEAGTNIGGMLEHVRQTMAELTNKPSHEIFIQDLLAVDTSVPVSVTGGLAGEFSLEQAVGIASMVKSDRLQMAMIAQEITQKLNIDVQVGGAEAEAAILGALTTPGTTRPLAILDLGAGSTDASIINPKGEIIATHLAGAGDMVTMIIARELGLEDRYLAEEIKKYPLAKVESLFHLRHEDGSVQFFPTPLPPTVFARVCVVKPDELVPLPGELALEKVRAIRRSAKERVFVTNALRALRQVSPTGNIRDIPFVVLVGGSSLDFEVPQLVTDALAHYRLVAGRGNIRGTEGPRNAVATGLILSWYKAFAHGK.

Position 11 to 13 (11 to 13 (NSS)) interacts with ATP. Positions 105, 166, and 183 each coordinate Mg(2+). ATP is bound by residues 459-462 (EEIK), 557-558 (GS), and arginine 591.

The protein belongs to the DdrA/PduG family. In terms of assembly, forms a heterotetramer PduG(2)/PduH(2). Mg(2+) serves as cofactor.

The protein resides in the bacterial microcompartment. The catalysed reaction is ATP + H2O = ADP + phosphate + H(+). The protein operates within polyol metabolism; 1,2-propanediol degradation. Its function is as follows. Large subunit of the propanediol dehydratase-reactivating factor (DDR), which reactivates suicidally inhibited adenosylcobalamin-dependent propanediol dehydratase (diol dehydratase, DDH) found in the bacterial microcompartment (BMC) dedicated to 1,2-propanediol (1,2-PD) degradation. Reactivates inactivated DDH in the presence of ATP, Mg(2+) and free adenosylcobalamin (AdoCbl), by mediating the exchange of the tightly bound damaged cofactor AdoCbl for a free intact one. This subunit contains the adenosine nucleotide binding site. Functionally, expression of a cosmid containing the full 21-gene pdu operon in E.coli allows E.coli to grow on 1,2-propanediol (1,2-PD) with the appearance of bacterial microcompartments (BMC) in its cytoplasm. In terms of biological role, the 1,2-PD-specific bacterial microcompartment (BMC) concentrates low levels of 1,2-PD catabolic enzymes, concentrates volatile reaction intermediates thus enhancing pathway flux and keeps the level of toxic, mutagenic propionaldehyde low. The chain is Propanediol dehydratase-reactivating factor large subunit from Citrobacter freundii.